The primary structure comprises 357 residues: Protein RecA (357 aa).

73 to 80 (GPESSGKT) contributes to the ATP binding site.

The protein belongs to the RecA family.

It is found in the cytoplasm. Can catalyze the hydrolysis of ATP in the presence of single-stranded DNA, the ATP-dependent uptake of single-stranded DNA by duplex DNA, and the ATP-dependent hybridization of homologous single-stranded DNAs. It interacts with LexA causing its activation and leading to its autocatalytic cleavage. The polypeptide is Protein RecA (Nitratidesulfovibrio vulgaris (strain DSM 19637 / Miyazaki F) (Desulfovibrio vulgaris)).